We begin with the raw amino-acid sequence, 250 residues long: Orotidine 5'-phosphate decarboxylase (250 aa).

Substrate-binding positions include D9, K40, 67–76, T132, R190, Q204, G224, and R225; that span reads DLKFHDIPNT. The active-site Proton donor is K69.

This sequence belongs to the OMP decarboxylase family. Type 1 subfamily. Homodimer.

The enzyme catalyses orotidine 5'-phosphate + H(+) = UMP + CO2. The protein operates within pyrimidine metabolism; UMP biosynthesis via de novo pathway; UMP from orotate: step 2/2. Its function is as follows. Catalyzes the decarboxylation of orotidine 5'-monophosphate (OMP) to uridine 5'-monophosphate (UMP). The chain is Orotidine 5'-phosphate decarboxylase from Nitratidesulfovibrio vulgaris (strain DSM 19637 / Miyazaki F) (Desulfovibrio vulgaris).